We begin with the raw amino-acid sequence, 436 residues long: DNA primase DnaG (436 aa).

The Toprim domain maps to 169–243; the sequence is DSIIVVEGRA…DIDYVARAPY (75 aa). Residues Glu-175, Asp-217, and Asp-219 each coordinate Mg(2+).

This sequence belongs to the archaeal DnaG primase family. Forms a ternary complex with MCM helicase and DNA. It depends on Mg(2+) as a cofactor.

The catalysed reaction is ssDNA + n NTP = ssDNA/pppN(pN)n-1 hybrid + (n-1) diphosphate.. RNA polymerase that catalyzes the synthesis of short RNA molecules used as primers for DNA polymerase during DNA replication. The protein is DNA primase DnaG of Methanococcus maripaludis (strain DSM 14266 / JCM 13030 / NBRC 101832 / S2 / LL).